The following is a 343-amino-acid chain: Galactoside alpha-(1,2)-fucosyltransferase 2 (343 aa).

Over 1 to 14 the chain is Cytoplasmic; that stretch reads MLVVQMPFSFPMAH. Residues 15–28 traverse the membrane as a helical; Signal-anchor for type II membrane protein segment; it reads FILFVFTVSTIFHV. Residues 29 to 343 are Lumenal-facing; it reads QQRLAKIQAM…AADLSPLLKH (315 aa). N-linked (GlcNAc...) asparagine glycans are attached at residues asparagine 188, asparagine 282, and asparagine 308.

This sequence belongs to the glycosyltransferase 11 family.

The protein localises to the golgi apparatus. It is found in the golgi stack membrane. The catalysed reaction is a beta-D-galactosyl-(1-&gt;3)-N-acetyl-beta-D-glucosaminyl derivative + GDP-beta-L-fucose = an alpha-L-Fuc-(1-&gt;2)-beta-D-Gal-(1-&gt;3)-beta-D-GlcNAc derivative + GDP + H(+). It carries out the reaction a beta-D-galactosyl-(1-&gt;4)-N-acetyl-beta-D-glucosaminyl derivative + GDP-beta-L-fucose = an alpha-L-Fuc-(1-&gt;2)-beta-D-Gal-(1-&gt;4)-beta-D-GlcNAc derivative + GDP + H(+). The enzyme catalyses a neolactoside nLc4Cer + GDP-beta-L-fucose = a neolactoside IV(2)-alpha-Fuc-nLc4Cer + GDP + H(+). It catalyses the reaction a neolactoside nLc4Cer(d18:1(4E)) + GDP-beta-L-fucose = a neolactoside IV(2)-alpha-Fuc-nLc4Cer(d18:1(4E)) + GDP + H(+). The catalysed reaction is a ganglioside GM1 + GDP-beta-L-fucose = a ganglioside Fuc-GM1 + GDP + H(+). It carries out the reaction a ganglioside GA1 + GDP-beta-L-fucose = a ganglioside Fuc-GA1 + GDP + H(+). The enzyme catalyses Lc4Cer + GDP-beta-L-fucose = alpha-L-fucosyl-(1-&gt;2)-beta-D-galactosyl-(1-&gt;3)-N-acetyl-beta-D-glucosaminyl-(1-&gt;3)-beta-D-galactosyl-(1-&gt;4)-beta-D-glucosyl-(1&lt;-&gt;1')-ceramide + GDP + H(+). It catalyses the reaction a beta-D-Gal-(1-&gt;3)-beta-D-GlcNAc-(1-&gt;3)-beta-D-Gal-(1-&gt;4)-beta-D-Glc-(1&lt;-&gt;1')-Cer(d18:1(4E)) + GDP-beta-L-fucose = alpha-L-fucosyl-(1-&gt;2)- beta-D-galactosyl-(1-&gt;3)-N-acetyl-beta-D-glucosaminyl-(1-&gt;3)-beta-D-galactosyl-(1-&gt;4)-beta-D-glucosyl-(1&lt;-&gt;1')-N-acylsphing-4-enine + GDP + H(+). The catalysed reaction is a ganglioside GD1b + GDP-beta-L-fucose = a ganglioside Fuc-GD1b + GDP + H(+). It carries out the reaction a ganglioside GM1 (d18:1(4E)) + GDP-beta-L-fucose = a ganglioside Fuc-GM1 (d18:1(4E)) + GDP + H(+). The enzyme catalyses a globoside GalGb4Cer (d18:1(4E)) + GDP-beta-L-fucose = a globoside Globo-H (d18:1(4E)) + GDP + H(+). It catalyses the reaction a lactoside III(4)-a-Fuc-Lc4Cer + GDP-beta-L-fucose = a lactoside IV(2),III(4)-a-[Fuc]2-Lc4Cer + GDP + H(+). The catalysed reaction is beta-D-galactosyl-(1-&gt;3)-N-acetyl-D-galactosamine + GDP-beta-L-fucose = alpha-L-fucosyl-(1-&gt;2)-beta-D-galactosyl-(1-&gt;3)-N-acetyl-D-galactosamine + GDP + H(+). The protein operates within protein modification; protein glycosylation. Its function is as follows. Catalyzes the transfer of L-fucose, from a guanosine diphosphate-beta-L-fucose, to the terminal galactose on both O- and N-linked glycans chains of cell surface glycoproteins and glycolipids and the resulting epitope regulates several processes such as cell-cell interaction including host-microbe interaction, cell surface expression and cell proliferation. Preferentially fucosylates gangliosides GA1 and GM1 in the antrum, cecum and colon and in the female reproductive organs. Fucosylated host glycoproteins or glycolipids mediate interaction with intestinal microbiota influencing its composition. Creates a soluble precursor oligosaccharide FuC-alpha ((1,2)Galbeta-) called the H antigen which is an essential substrate for the final step in the soluble ABO blood group antigen synthesis pathway. This is Galactoside alpha-(1,2)-fucosyltransferase 2 from Hylobates lar (Lar gibbon).